The chain runs to 332 residues: MLAEKLQINSITPHPSVEYWSVCKVEALFETPFLELVYRAAQIHRKHFNSRTIQLSTLMSIKTGGCPEDCGYCPQSARYHTGVQNQQLLDVNEIIAKAKIAKARGAGRFCMGAAWRGPKPKDIEKVTEIIKAVKSLGLETCGTFGLLQDGMAEDLKEAGLDYYNHNLDTAPEHYAEVIGTRRFDDRLSTLGKVRKAGLKVCCGGIVGMNETRKERAGLIASLANLDPQPESVPINQLVKVEGTPLADAEELDWTEFVRTIAVARITMPKSYVRLSAGRSGMTEEMQAMCFMAGANSIFYGDKLLVTDNPEEDGDQLLMAKLDLEPETAENKK.

Residues 51-278 enclose the Radical SAM core domain; it reads RTIQLSTLMS…KSYVRLSAGR (228 aa). [4Fe-4S] cluster is bound by residues Cys-66, Cys-70, and Cys-73. [2Fe-2S] cluster is bound by residues Cys-110, Cys-141, Cys-201, and Arg-273.

It belongs to the radical SAM superfamily. Biotin synthase family. In terms of assembly, homodimer. The cofactor is [4Fe-4S] cluster. It depends on [2Fe-2S] cluster as a cofactor.

It carries out the reaction (4R,5S)-dethiobiotin + (sulfur carrier)-SH + 2 reduced [2Fe-2S]-[ferredoxin] + 2 S-adenosyl-L-methionine = (sulfur carrier)-H + biotin + 2 5'-deoxyadenosine + 2 L-methionine + 2 oxidized [2Fe-2S]-[ferredoxin]. It participates in cofactor biosynthesis; biotin biosynthesis; biotin from 7,8-diaminononanoate: step 2/2. Its function is as follows. Catalyzes the conversion of dethiobiotin (DTB) to biotin by the insertion of a sulfur atom into dethiobiotin via a radical-based mechanism. The sequence is that of Biotin synthase from Haemophilus influenzae (strain PittGG).